A 586-amino-acid chain; its full sequence is Actin-related protein 9 (586 aa).

Residues 141 to 169 (STPIVDKDADVDPLQRSTPDDTEPNSEEN) form a disordered region.

It belongs to the actin family. ARP8 subfamily.

This Oryza sativa subsp. japonica (Rice) protein is Actin-related protein 9 (ARP9).